The primary structure comprises 375 residues: 23S rRNA (uracil(747)-C(5))-methyltransferase RlmC (375 aa).

4 residues coordinate [4Fe-4S] cluster: Cys3, Cys11, Cys14, and Cys87. Residues Gln212, Phe241, Glu262, and Asn307 each contribute to the S-adenosyl-L-methionine site. Catalysis depends on Cys334, which acts as the Nucleophile.

This sequence belongs to the class I-like SAM-binding methyltransferase superfamily. RNA M5U methyltransferase family. RlmC subfamily.

It carries out the reaction uridine(747) in 23S rRNA + S-adenosyl-L-methionine = 5-methyluridine(747) in 23S rRNA + S-adenosyl-L-homocysteine + H(+). In terms of biological role, catalyzes the formation of 5-methyl-uridine at position 747 (m5U747) in 23S rRNA. This is 23S rRNA (uracil(747)-C(5))-methyltransferase RlmC from Salmonella arizonae (strain ATCC BAA-731 / CDC346-86 / RSK2980).